A 361-amino-acid polypeptide reads, in one-letter code: Ribosomal RNA large subunit methyltransferase M (361 aa).

Residues serine 187, 220–223 (CPGG), aspartate 239, aspartate 259, and aspartate 276 each bind S-adenosyl-L-methionine. Catalysis depends on lysine 305, which acts as the Proton acceptor.

The protein belongs to the class I-like SAM-binding methyltransferase superfamily. RNA methyltransferase RlmE family. RlmM subfamily. Monomer.

The protein resides in the cytoplasm. The enzyme catalyses cytidine(2498) in 23S rRNA + S-adenosyl-L-methionine = 2'-O-methylcytidine(2498) in 23S rRNA + S-adenosyl-L-homocysteine + H(+). In terms of biological role, catalyzes the 2'-O-methylation at nucleotide C2498 in 23S rRNA. This Shewanella sp. (strain MR-7) protein is Ribosomal RNA large subunit methyltransferase M.